An 840-amino-acid polypeptide reads, in one-letter code: Phosphatidylglycerol lysyltransferase (840 aa).

The Cytoplasmic segment spans residues 1–8 (MTEELKNR). Residues 9–29 (LLSILKFVFAAVLFIAVVATL) traverse the membrane as a helical segment. Residues 30 to 52 (YHELAHINFKQTLEAFSKINRWY) are Extracellular-facing. The chain crosses the membrane as a helical span at residues 53 to 73 (LVGLFICGGSAMILLSLYDLI). At 74-89 (LVKGLKLDIPLIRVFK) the chain is on the cytoplasmic side. A helical transmembrane segment spans residues 90 to 110 (ISYIINALNAIVGFGGFIGAG). Residues 111–129 (FRAFIYKNYTTDRKKLVHA) are Extracellular-facing. A helical membrane pass occupies residues 130 to 150 (ISIILISMLMGLSLLSILVVL). Topologically, residues 151-167 (HIFDASHIINKVSWVRW) are cytoplasmic. Residues 168 to 188 (ILYVVALFLPLFIAYTMINPI) form a helical membrane-spanning segment. At 189–193 (DRNNK) the chain is on the extracellular side. A helical transmembrane segment spans residues 194 to 216 (YLGVYCTLVSSFEWLAAATVLYL). The Cytoplasmic segment spans residues 217-229 (STVIVDINIAFTT). The helical transmembrane segment at 230 to 250 (VIGIFIIAALSGLVSFIPGGF) threads the bilayer. The Extracellular portion of the chain corresponds to 251-271 (GAFDLVVLLGLKSLGVPEEKV). The helical transmembrane segment at 272-292 (LLALLLYRFAYYFVPVIIALI) threads the bilayer. Over 293-335 (LSTFEFGSSARKYFEESKYFVPARDVTSFLFSYQKDIIAKIPS) the chain is Cytoplasmic. The helical transmembrane segment at 336 to 356 (FALATLVLITSFVFFINNITI) threads the bilayer. Over 357 to 366 (VYDGLYDDHH) the chain is Extracellular. The chain crosses the membrane as a helical span at residues 367-387 (FAYYIMLSVHTSACLLLLINV). The Cytoplasmic segment spans residues 388-394 (RGVFKQS). A run of 2 helical transmembrane segments spans residues 395–415 (RRAI…TIYT) and 416–436 (YASL…ILAY). The Cytoplasmic segment spans residues 437-450 (RRSKVMKRPFRLKR). A helical transmembrane segment spans residues 451–471 (LIFTIILSMLVLYVNHFIISE). The Extracellular segment spans residues 472 to 490 (TLYALDIYHIEMDTSLLKY). The chain crosses the membrane as a helical span at residues 491–511 (YFWLTILVVVILVGIVAWLLG). Residues 512–840 (SRYTRPHQLE…LKVMRVIRHK (329 aa)) lie on the Cytoplasmic side of the membrane.

It belongs to the LPG synthase family.

The protein resides in the cell membrane. It catalyses the reaction L-lysyl-tRNA(Lys) + a 1,2-diacyl-sn-glycero-3-phospho-(1'-sn-glycerol) = a 1,2-diacyl-sn-glycero-3-phospho-1'-(3'-O-L-lysyl)-sn-glycerol + tRNA(Lys). Its function is as follows. Catalyzes the transfer of a lysyl group from L-lysyl-tRNA(Lys) to membrane-bound phosphatidylglycerol (PG), which produces lysylphosphatidylglycerol (LPG), a major component of the bacterial membrane with a positive net charge. LPG synthesis contributes to bacterial virulence as it is involved in the resistance mechanism against cationic antimicrobial peptides (CAMP) produces by the host's immune system (defensins, cathelicidins) and by the competing microorganisms (bacteriocins). In fact, the modification of anionic phosphatidylglycerol with positively charged L-lysine results in repulsion of the peptides. This chain is Phosphatidylglycerol lysyltransferase (mprF), found in Staphylococcus haemolyticus (strain JCSC1435).